The following is a 350-amino-acid chain: Ferrochelatase (350 aa).

The Fe cation site is built by His-220 and Glu-301.

It belongs to the ferrochelatase family.

Its subcellular location is the cytoplasm. The catalysed reaction is heme b + 2 H(+) = protoporphyrin IX + Fe(2+). It functions in the pathway porphyrin-containing compound metabolism; protoheme biosynthesis; protoheme from protoporphyrin-IX: step 1/1. Its function is as follows. Catalyzes the ferrous insertion into protoporphyrin IX. In Brucella anthropi (strain ATCC 49188 / DSM 6882 / CCUG 24695 / JCM 21032 / LMG 3331 / NBRC 15819 / NCTC 12168 / Alc 37) (Ochrobactrum anthropi), this protein is Ferrochelatase.